An 872-amino-acid chain; its full sequence is Sine oculis-binding protein homolog (872 aa).

Residues 1 to 14 show a composition bias toward basic and acidic residues; the sequence is MAEMEKEGRPPENK. A disordered region spans residues 1–26; that stretch reads MAEMEKEGRPPENKRSRKPAHPVKRE. FCS-type zinc fingers lie at residues 142-180 and 216-256; these read DDVS…KCFA and FKNN…KCLN. Disordered regions lie at residues 308–354, 411–484, and 550–619; these read RRKA…KSMP, FIRG…PGAP, and KPPN…GRSE. Over residues 319-344 the composition is skewed to polar residues; that stretch reads GQSQGPGPSASTTVSPSDTANCSVTK. Residues 417–433 show a composition bias toward low complexity; it reads HHASNPNSPLSNPMLPG. Residues 460–484 are compositionally biased toward pro residues; sequence IHPPSTPTMPGNPPGLLPPPPPGAP. Residues 620-624 carry the SUMO interaction motif 1 (SIM); mediates the binding to polysumoylated substrates motif; the sequence is VVDLT. Position 629 is a phosphoserine (S629). Positions 651 to 655 match the SUMO interaction motif 2 (SIM); mediates the binding to polysumoylated substrates motif; that stretch reads VIDLT. K675 is covalently cross-linked (Glycyl lysine isopeptide (Lys-Gly) (interchain with G-Cter in SUMO2)). Position 697 is a phosphoserine (S697). Residues 728–770 are disordered; the sequence is AAEGAKGAEPPPEQPPPPPPPPPAPPKKLLSPEEPAVSELESV. Pro residues predominate over residues 736-753; the sequence is EPPPEQPPPPPPPPPAPP.

It belongs to the SOBP family. Interacts (via SIM domains) with SUMO1 and SUMO2.

Implicated in development of the cochlea. The protein is Sine oculis-binding protein homolog of Bos taurus (Bovine).